A 388-amino-acid chain; its full sequence is N5-carboxyaminoimidazole ribonucleotide synthase (388 aa).

ATP contacts are provided by residues Lys-105, Lys-140, 174-177 (ESFV), Glu-182, and 267-268 (NE). The ATP-grasp domain occupies 109–297 (RHFLQNLGLP…QFALQLQAVT (189 aa)).

The protein belongs to the PurK/PurT family. As to quaternary structure, homodimer.

It catalyses the reaction 5-amino-1-(5-phospho-beta-D-ribosyl)imidazole + hydrogencarbonate + ATP = 5-carboxyamino-1-(5-phospho-D-ribosyl)imidazole + ADP + phosphate + 2 H(+). It participates in purine metabolism; IMP biosynthesis via de novo pathway; 5-amino-1-(5-phospho-D-ribosyl)imidazole-4-carboxylate from 5-amino-1-(5-phospho-D-ribosyl)imidazole (N5-CAIR route): step 1/2. Its function is as follows. Catalyzes the ATP-dependent conversion of 5-aminoimidazole ribonucleotide (AIR) and HCO(3)(-) to N5-carboxyaminoimidazole ribonucleotide (N5-CAIR). This is N5-carboxyaminoimidazole ribonucleotide synthase from Synechocystis sp. (strain ATCC 27184 / PCC 6803 / Kazusa).